The following is a 364-amino-acid chain: Mannose-1-phosphate guanyltransferase (364 aa).

The protein belongs to the transferase hexapeptide repeat family.

Its subcellular location is the cytoplasm. The catalysed reaction is alpha-D-mannose 1-phosphate + GTP + H(+) = GDP-alpha-D-mannose + diphosphate. It participates in nucleotide-sugar biosynthesis; GDP-alpha-D-mannose biosynthesis; GDP-alpha-D-mannose from alpha-D-mannose 1-phosphate (GTP route): step 1/1. Functionally, involved in cell wall synthesis where it is required for glycosylation. Involved in cell cycle progression through cell-size checkpoint. The chain is Mannose-1-phosphate guanyltransferase (mpg-1) from Neurospora crassa (strain ATCC 24698 / 74-OR23-1A / CBS 708.71 / DSM 1257 / FGSC 987).